Here is a 743-residue protein sequence, read N- to C-terminus: Ribosome biogenesis protein BOP1 homolog (743 aa).

WD repeat units follow at residues 365-404 (GHTATVRSVSVSPNGQYLATGCDDHLVRVYEVQTGRLMKR), 575-615 (KFSE…RRFK), 617-655 (SGGVTTCLSIHPEGDNFLVGDTTSHTSWFDMDFSDKPYK), 659-701 (SHKG…DYNK), and 712-743 (KHQRSVYAVAWHPSLAWLFTSTEDGVVTAWTE).

It belongs to the WD repeat BOP1/ERB1 family.

It is found in the nucleus. It localises to the nucleolus. The protein localises to the nucleoplasm. Functionally, required for maturation of ribosomal RNAs and formation of the large ribosomal subunit. This Leishmania braziliensis protein is Ribosome biogenesis protein BOP1 homolog.